Reading from the N-terminus, the 72-residue chain is Beta-defensin 104A (72 aa).

An N-terminal signal peptide occupies residues 1-22; that stretch reads MRRLVLLLAISLLLYQDLPVRS. 3 cysteine pairs are disulfide-bonded: cysteine 30–cysteine 57, cysteine 37–cysteine 51, and cysteine 41–cysteine 58.

The protein belongs to the beta-defensin family.

The protein localises to the secreted. Has antimicrobial activity. The protein is Beta-defensin 104A (DEFB104A) of Pongo pygmaeus (Bornean orangutan).